The primary structure comprises 402 residues: NADH-quinone oxidoreductase subunit D (402 aa).

The protein belongs to the complex I 49 kDa subunit family. In terms of assembly, NDH-1 is composed of 14 different subunits. Subunits NuoB, C, D, E, F, and G constitute the peripheral sector of the complex.

Its subcellular location is the cell inner membrane. The enzyme catalyses a quinone + NADH + 5 H(+)(in) = a quinol + NAD(+) + 4 H(+)(out). NDH-1 shuttles electrons from NADH, via FMN and iron-sulfur (Fe-S) centers, to quinones in the respiratory chain. The immediate electron acceptor for the enzyme in this species is believed to be ubiquinone. Couples the redox reaction to proton translocation (for every two electrons transferred, four hydrogen ions are translocated across the cytoplasmic membrane), and thus conserves the redox energy in a proton gradient. This chain is NADH-quinone oxidoreductase subunit D, found in Protochlamydia amoebophila (strain UWE25).